The following is a 177-amino-acid chain: Glutathione peroxidase homolog (177 aa).

Residue Cys-35 is part of the active site.

It belongs to the glutathione peroxidase family.

In terms of biological role, important in the cellular metabolism or defense processes particular to this pathogen. In Neisseria meningitidis serogroup A / serotype 4A (strain DSM 15465 / Z2491), this protein is Glutathione peroxidase homolog (gpxA).